The following is a 485-amino-acid chain: UDP-N-acetylmuramoyl-L-alanyl-D-glutamate--2,6-diaminopimelate ligase (485 aa).

Serine 32 contributes to the UDP-N-acetyl-alpha-D-muramoyl-L-alanyl-D-glutamate binding site. Glycine 111–threonine 117 contacts ATP. Residues threonine 153–threonine 154, serine 180, and arginine 188 contribute to the UDP-N-acetyl-alpha-D-muramoyl-L-alanyl-D-glutamate site. Lysine 220 bears the N6-carboxylysine mark. Residues arginine 382, aspartate 405 to arginine 408, glycine 455, and glutamate 459 contribute to the meso-2,6-diaminopimelate site. Residues aspartate 405–arginine 408 carry the Meso-diaminopimelate recognition motif motif.

This sequence belongs to the MurCDEF family. MurE subfamily. Mg(2+) serves as cofactor. In terms of processing, carboxylation is probably crucial for Mg(2+) binding and, consequently, for the gamma-phosphate positioning of ATP.

It is found in the cytoplasm. It catalyses the reaction UDP-N-acetyl-alpha-D-muramoyl-L-alanyl-D-glutamate + meso-2,6-diaminopimelate + ATP = UDP-N-acetyl-alpha-D-muramoyl-L-alanyl-gamma-D-glutamyl-meso-2,6-diaminopimelate + ADP + phosphate + H(+). It functions in the pathway cell wall biogenesis; peptidoglycan biosynthesis. Catalyzes the addition of meso-diaminopimelic acid to the nucleotide precursor UDP-N-acetylmuramoyl-L-alanyl-D-glutamate (UMAG) in the biosynthesis of bacterial cell-wall peptidoglycan. The polypeptide is UDP-N-acetylmuramoyl-L-alanyl-D-glutamate--2,6-diaminopimelate ligase (Chlamydia felis (strain Fe/C-56) (Chlamydophila felis)).